A 60-amino-acid chain; its full sequence is Mastoparan-V (60 aa).

Positions M1 to A27 are cleaved as a signal peptide. AXPX repeat units follow at residues A27–V30, A31–L34, A35–N38, and A41–E44. A propeptide spanning residues D28–A45 is cleaved from the precursor. Leucine amide is present on L59.

Belongs to the MCD family. Mastoparan subfamily. Expressed by the venom gland.

The protein resides in the secreted. It localises to the target cell membrane. Its function is as follows. Antimicrobial and mast cell degranulating peptide. Has broad spectrum antibacterial activity against both Gram-positive and Gram-negative bacteria (S.aureus MIC=32-64 ug/ml, S.xylosus MIC=3 ug/ml, S.alactolyticus MIC=16 ug/ml, C.koseri MIC=4 ug/ml, E.coli MIC=8 ug/ml, K.pneumoniae MIC=64 ug/ml, P.aerugiosa MIC=256 ug/ml, S.choleraesuis MIC=32 ug/ml, S.typhimurium MIC=32 ug/ml, V.parahamelytics MIC=32 ug/ml). Affects membrane permeability of E.coli. Shows hemolytic activities on sheep, chicken and human erythrocytes. Its mast cell degranulation activity may be related to the activation of G-protein coupled receptors in mast cells as well as interaction with other proteins located in cell endosomal membranes in the mast cells. This is Mastoparan-V from Vespa velutina flavitarsus (Asian hornet).